Consider the following 530-residue polypeptide: CTP synthase (530 aa).

Residues methionine 1–methionine 267 are amidoligase domain. Residue serine 13 coordinates CTP. Residue serine 13 coordinates UTP. Residue serine 14 to isoleucine 19 participates in ATP binding. L-glutamine is bound at residue tyrosine 54. Aspartate 71 serves as a coordination point for ATP. Aspartate 71 and glutamate 141 together coordinate Mg(2+). Residues aspartate 148 to glutamate 150, lysine 188 to glutamine 193, and lysine 224 each bind CTP. UTP is bound by residues lysine 188–glutamine 193 and lysine 224. Residue arginine 240 to alanine 242 participates in ATP binding. Residues lysine 292–methionine 530 form the Glutamine amidotransferase type-1 domain. Glycine 354 provides a ligand contact to L-glutamine. Cysteine 381 acts as the Nucleophile; for glutamine hydrolysis in catalysis. L-glutamine is bound by residues leucine 382–glutamine 385, glutamate 405, and arginine 463. Catalysis depends on residues histidine 508 and glutamate 510.

Belongs to the CTP synthase family. Homotetramer.

It carries out the reaction UTP + L-glutamine + ATP + H2O = CTP + L-glutamate + ADP + phosphate + 2 H(+). The enzyme catalyses L-glutamine + H2O = L-glutamate + NH4(+). The catalysed reaction is UTP + NH4(+) + ATP = CTP + ADP + phosphate + 2 H(+). The protein operates within pyrimidine metabolism; CTP biosynthesis via de novo pathway; CTP from UDP: step 2/2. With respect to regulation, allosterically activated by GTP, when glutamine is the substrate; GTP has no effect on the reaction when ammonia is the substrate. The allosteric effector GTP functions by stabilizing the protein conformation that binds the tetrahedral intermediate(s) formed during glutamine hydrolysis. Inhibited by the product CTP, via allosteric rather than competitive inhibition. Functionally, catalyzes the ATP-dependent amination of UTP to CTP with either L-glutamine or ammonia as the source of nitrogen. Regulates intracellular CTP levels through interactions with the four ribonucleotide triphosphates. The protein is CTP synthase of Latilactobacillus sakei subsp. sakei (strain 23K) (Lactobacillus sakei subsp. sakei).